A 251-amino-acid polypeptide reads, in one-letter code: NADPH-dependent oxidoreductase (251 aa).

Belongs to the flavin oxidoreductase frp family. FMN is required as a cofactor.

Functionally, reduces FMN, organic nitro compounds and disulfide DTNB. Involved in maintenance of the cellular redox state and the disulfide stress response. The sequence is that of NADPH-dependent oxidoreductase (nfrA) from Staphylococcus aureus (strain USA300).